The following is a 159-amino-acid chain: Cystatin-9 (159 aa).

Positions 1–28 (MSSPQRRKAMPWALSLLLMGFQLLVTYA) are cleaved as a signal peptide.

This sequence belongs to the cystatin family. In terms of tissue distribution, expressed in heart, placenta, lung, liver, skeletal muscle and pancreas. Not expressed in brain. Expressed in epididymis, kidney, testis, spinal cord, and thymus with a strong expression in epididymis and kidney and a weak expression in the spinal cord and thymus.

The protein resides in the secreted. May be involved in testis development. May play a role in hematopoietic differentiation or inflammation. Has immunomodulatory and antimicrobial functions against Francisella tularensis, a Gram-negative bacteria. The chain is Cystatin-9 (CST9) from Homo sapiens (Human).